The sequence spans 290 residues: Nucleoid occlusion protein (290 aa).

A DNA-binding region (H-T-H motif) is located at residues 153–172; it reads EALAQRLGKGQSTIANKLRL.

The protein belongs to the ParB family.

The protein localises to the cytoplasm. Its subcellular location is the nucleoid. Functionally, effects nucleoid occlusion by binding relatively nonspecifically to DNA and preventing the assembly of the division machinery in the vicinity of the nucleoid, especially under conditions that disturb the cell cycle. It helps to coordinate cell division and chromosome segregation by preventing the formation of the Z ring through the nucleoid, which would cause chromosome breakage. The polypeptide is Nucleoid occlusion protein (Bacillus anthracis (strain A0248)).